We begin with the raw amino-acid sequence, 862 residues long: Bifunctional uridylyltransferase/uridylyl-removing enzyme (862 aa).

Residues 1 to 328 (MSTAAIPTDA…FPRRAGAAIV (328 aa)) form a uridylyltransferase region. The uridylyl-removing stretch occupies residues 329 to 685 (INERFQAVRE…ARVSDADQGV (357 aa)). An HD domain is found at 447–563 (VDQHIMMVLR…GRFADTVGTE (117 aa)). ACT domains are found at residues 686–765 (QVMV…DRPS) and 794–862 (ILSL…RLHI).

Belongs to the GlnD family. Mg(2+) serves as cofactor.

It carries out the reaction [protein-PII]-L-tyrosine + UTP = [protein-PII]-uridylyl-L-tyrosine + diphosphate. The enzyme catalyses [protein-PII]-uridylyl-L-tyrosine + H2O = [protein-PII]-L-tyrosine + UMP + H(+). Uridylyltransferase (UTase) activity is inhibited by glutamine, while glutamine activates uridylyl-removing (UR) activity. In terms of biological role, modifies, by uridylylation and deuridylylation, the PII regulatory proteins (GlnB and homologs), in response to the nitrogen status of the cell that GlnD senses through the glutamine level. Under low glutamine levels, catalyzes the conversion of the PII proteins and UTP to PII-UMP and PPi, while under higher glutamine levels, GlnD hydrolyzes PII-UMP to PII and UMP (deuridylylation). Thus, controls uridylylation state and activity of the PII proteins, and plays an important role in the regulation of nitrogen assimilation and metabolism. The polypeptide is Bifunctional uridylyltransferase/uridylyl-removing enzyme (Aromatoleum aromaticum (strain DSM 19018 / LMG 30748 / EbN1) (Azoarcus sp. (strain EbN1))).